The sequence spans 149 residues: Ribonuclease H (149 aa).

Positions 1 to 141 constitute an RNase H type-1 domain; it reads MKTVTLFSDG…CDTMAREKAT (141 aa). Aspartate 9, glutamate 47, aspartate 69, and aspartate 133 together coordinate Mg(2+).

Belongs to the RNase H family. In terms of assembly, monomer. Requires Mg(2+) as cofactor.

The protein localises to the cytoplasm. The enzyme catalyses Endonucleolytic cleavage to 5'-phosphomonoester.. Its function is as follows. Endonuclease that specifically degrades the RNA of RNA-DNA hybrids. The sequence is that of Ribonuclease H from Campylobacter curvus (strain 525.92).